A 187-amino-acid chain; its full sequence is dCTP deaminase (187 aa).

DCTP contacts are provided by residues 110-115, 134-136, Q155, Y169, and Q179; these read KSTYAR and TLE. E136 functions as the Proton donor/acceptor in the catalytic mechanism.

The protein belongs to the dCTP deaminase family. Homotrimer.

It catalyses the reaction dCTP + H2O + H(+) = dUTP + NH4(+). Its pathway is pyrimidine metabolism; dUMP biosynthesis; dUMP from dCTP (dUTP route): step 1/2. In terms of biological role, catalyzes the deamination of dCTP to dUTP. This Bordetella bronchiseptica (strain ATCC BAA-588 / NCTC 13252 / RB50) (Alcaligenes bronchisepticus) protein is dCTP deaminase.